A 184-amino-acid polypeptide reads, in one-letter code: Large ribosomal subunit protein uL22 (184 aa).

It belongs to the universal ribosomal protein uL22 family.

The protein is Large ribosomal subunit protein uL22 (RPL17) of Yarrowia lipolytica (strain CLIB 122 / E 150) (Yeast).